A 395-amino-acid chain; its full sequence is Chaperone protein DnaJ (395 aa).

The region spanning 4-69 (DYYEVLGLSR…DKRRRYDQFG (66 aa)) is the J domain. The segment at 151 to 232 (GVEKTLKIKK…CYGEGIKQGE (82 aa)) adopts a CR-type zinc-finger fold. The Zn(2+) site is built by Cys164, Cys167, Cys180, Cys183, Cys206, Cys209, Cys220, and Cys223. 4 CXXCXGXG motif repeats span residues 164 to 171 (CTECNGTG), 180 to 187 (CPTCHGSG), 206 to 213 (CPTCGGEG), and 220 to 227 (CVSCYGEG).

This sequence belongs to the DnaJ family. Homodimer. Zn(2+) serves as cofactor.

It is found in the cytoplasm. In terms of biological role, participates actively in the response to hyperosmotic and heat shock by preventing the aggregation of stress-denatured proteins and by disaggregating proteins, also in an autonomous, DnaK-independent fashion. Unfolded proteins bind initially to DnaJ; upon interaction with the DnaJ-bound protein, DnaK hydrolyzes its bound ATP, resulting in the formation of a stable complex. GrpE releases ADP from DnaK; ATP binding to DnaK triggers the release of the substrate protein, thus completing the reaction cycle. Several rounds of ATP-dependent interactions between DnaJ, DnaK and GrpE are required for fully efficient folding. Also involved, together with DnaK and GrpE, in the DNA replication of plasmids through activation of initiation proteins. This Chlorobium phaeobacteroides (strain DSM 266 / SMG 266 / 2430) protein is Chaperone protein DnaJ.